A 515-amino-acid polypeptide reads, in one-letter code: 1-pyrroline-5-carboxylate dehydrogenase (515 aa).

Active-site residues include Glu286 and Cys320.

This sequence belongs to the aldehyde dehydrogenase family. RocA subfamily.

It carries out the reaction L-glutamate 5-semialdehyde + NAD(+) + H2O = L-glutamate + NADH + 2 H(+). It functions in the pathway amino-acid degradation; L-proline degradation into L-glutamate; L-glutamate from L-proline: step 2/2. This chain is 1-pyrroline-5-carboxylate dehydrogenase, found in Geobacillus sp. (strain WCH70).